Consider the following 419-residue polypeptide: Phosphatidylinositol 5-phosphate 4-kinase type-2 gamma (419 aa).

A PIPK domain is found at 46-418; that stretch reads ASDPLISVFM…RFLEFVTNIF (373 aa). Positions 299-310 are enriched in acidic residues; sequence QEEEEDLEEDHT. The interval 299-320 is disordered; that stretch reads QEEEEDLEEDHTENESSPHMNV.

Post-translationally, phosphorylated, phosphorylation is induced by EGF.

The protein localises to the endoplasmic reticulum. It is found in the cytoplasm. The catalysed reaction is a 1,2-diacyl-sn-glycero-3-phospho-(1D-myo-inositol-5-phosphate) + ATP = a 1,2-diacyl-sn-glycero-3-phospho-(1D-myo-inositol-4,5-bisphosphate) + ADP + H(+). The enzyme catalyses 1,2-dihexadecanoyl-sn-glycero-3-phospho-(1D-myo-inositol-5-phosphate) + ATP = 1,2-dihexadecanoyl-sn-glycero-3-phospho-(1D-myo-inositol-4,5-bisphosphate) + ADP + H(+). It catalyses the reaction 1,2-dihexadecanoyl-sn-glycero-3-phospho-(1D-myo-inositol-5-phosphate) + GTP = 1,2-dihexadecanoyl-sn-glycero-3-phospho-(1D-myo-inositol-4,5-bisphosphate) + GDP + H(+). Phosphatidylinositol 5-phosphate 4-kinase with low enzymatic activity. May be a GTP sensor, has higher GTP-dependent kinase activity than ATP-dependent kinase activity. The chain is Phosphatidylinositol 5-phosphate 4-kinase type-2 gamma (pip4k2c) from Xenopus tropicalis (Western clawed frog).